The sequence spans 264 residues: MICOS complex subunit MIC27 (264 aa).

The transit peptide at 1–27 (MAALRMGKLTTMPTGLIYASISVHVAK) directs the protein to the mitochondrion. Residues 28 to 110 (EEESKKQLVK…YVYLKNPPRD (83 aa)) are Mitochondrial intermembrane-facing. A helical membrane pass occupies residues 111 to 129 (FLPKIGVITVSGLAGFISA). The Mitochondrial matrix segment spans residues 130–137 (RKGSRFKR). The chain crosses the membrane as a helical span at residues 138-155 (IAYPLGLATLGATVCYPV). At 156 to 264 (QSVIIAKVAG…EDIDMYSTRS (109 aa)) the chain is on the mitochondrial intermembrane side. The segment covering 189 to 198 (KLPEHKEKTK) has biased composition (basic and acidic residues). Positions 189-264 (KLPEHKEKTK…EDIDMYSTRS (76 aa)) are disordered. Residues 223–238 (AELSSETKTKSTSGAT) are compositionally biased toward low complexity. The span at 245–256 (KLMDHGQSHPED) shows a compositional bias: basic and acidic residues.

It belongs to the apolipoprotein O/MICOS complex subunit Mic27 family. Component of the mitochondrial contact site and cristae organizing system (MICOS) complex, composed of at least MICOS10/MIC10, CHCHD3/MIC19, CHCHD6/MIC25, APOOL/MIC27, IMMT/MIC60, APOO/MIC23/MIC26 and QIL1/MIC13. This complex was also known under the names MINOS or MitOS complex. The MICOS complex associates with mitochondrial outer membrane proteins SAMM50, MTX1 and MTX2 (together described as components of the mitochondrial outer membrane sorting assembly machinery (SAM) complex) and DNAJC11, mitochondrial inner membrane protein TMEM11 and with HSPA9. The MICOS and SAM complexes together with DNAJC11 are part of a large protein complex spanning both membranes termed the mitochondrial intermembrane space bridging (MIB) complex. Interacts with MICOS10/MIC10, IMMT/MIC60 and APOO/MIC23/MIC26.

The protein resides in the mitochondrion inner membrane. It localises to the mitochondrion. Functionally, component of the MICOS complex, a large protein complex of the mitochondrial inner membrane that plays crucial roles in the maintenance of crista junctions, inner membrane architecture, and formation of contact sites to the outer membrane. Specifically binds to cardiolipin (in vitro) but not to the precursor lipid phosphatidylglycerol. Plays a crucial role in crista junction formation and mitochondrial function. In Bos taurus (Bovine), this protein is MICOS complex subunit MIC27 (APOL).